The sequence spans 244 residues: Probable transcriptional regulatory protein DR_2548 (244 aa).

The disordered stretch occupies residues 1–23 (MAGHSKWAQIKRKKGANDKKRSA).

It belongs to the TACO1 family.

Its subcellular location is the cytoplasm. In Deinococcus radiodurans (strain ATCC 13939 / DSM 20539 / JCM 16871 / CCUG 27074 / LMG 4051 / NBRC 15346 / NCIMB 9279 / VKM B-1422 / R1), this protein is Probable transcriptional regulatory protein DR_2548.